Reading from the N-terminus, the 428-residue chain is uncharacterized protein (428 aa).

Residues 1 to 49 are disordered; sequence MRTQTFPPSSSSSRTTHPKKNRHSSNSSSMALVTPAKSSTGAAPKQSSQ. Positions 24–49 are enriched in polar residues; the sequence is SSNSSSMALVTPAKSSTGAAPKQSSQ.

This is an uncharacterized protein from Caenorhabditis elegans.